Here is a 285-residue protein sequence, read N- to C-terminus: Methanethiol S-methyltransferase 1 (285 aa).

5 consecutive transmembrane segments (helical) span residues 55–75 (AYLV…GLVV), 88–108 (AEAV…HSVM), 132–152 (LFAS…PTVI), 162–182 (VTLV…TFII), and 224–244 (FIVA…FAAV).

It belongs to the nurim family.

The protein resides in the membrane. The enzyme catalyses methanethiol + S-adenosyl-L-methionine = dimethyl sulfide + S-adenosyl-L-homocysteine + H(+). In terms of biological role, catalyzes the methylation of methanethiol (MeSH) to yield dimethylsulphide (DMS). The protein is Methanethiol S-methyltransferase 1 of Bradyrhizobium diazoefficiens (strain JCM 10833 / BCRC 13528 / IAM 13628 / NBRC 14792 / USDA 110).